The chain runs to 153 residues: Interleukin-4 (153 aa).

An N-terminal signal peptide occupies residues 1–24 (MGLTSQLLPPLFFLLACAGNFAHG). 3 disulfides stabilise this stretch: Cys27-Cys151, Cys48-Cys89, and Cys70-Cys123. The N-linked (GlcNAc...) asparagine glycan is linked to Asn62.

It belongs to the IL-4/IL-13 family.

The protein resides in the secreted. Functionally, participates in at least several B-cell activation processes as well as of other cell types. It is a costimulator of DNA-synthesis. It induces the expression of class II MHC molecules on resting B-cells. It enhances both secretion and cell surface expression of IgE and IgG1. It also regulates the expression of the low affinity Fc receptor for IgE (CD23) on both lymphocytes and monocytes. Positively regulates IL31RA expression in macrophages. Stimulates autophagy in dendritic cells by interfering with mTORC1 signaling and through the induction of RUFY4. In Cercocebus atys (Sooty mangabey), this protein is Interleukin-4 (IL4).